We begin with the raw amino-acid sequence, 101 residues long: Large ribosomal subunit protein uL23 (101 aa).

The protein belongs to the universal ribosomal protein uL23 family. Part of the 50S ribosomal subunit. Contacts protein L29, and trigger factor when it is bound to the ribosome.

One of the early assembly proteins it binds 23S rRNA. One of the proteins that surrounds the polypeptide exit tunnel on the outside of the ribosome. Forms the main docking site for trigger factor binding to the ribosome. The protein is Large ribosomal subunit protein uL23 of Synechocystis sp. (strain ATCC 27184 / PCC 6803 / Kazusa).